The primary structure comprises 59 residues: Potassium channel toxin alpha-KTx 1.1 (59 aa).

The N-terminal stretch at 1 to 22 (MKILSVLLLALIICSIVGWSEA) is a signal peptide. Glutamine 23 is modified (pyrrolidone carboxylic acid). Disulfide bonds link cysteine 29–cysteine 50, cysteine 35–cysteine 55, and cysteine 39–cysteine 57. The interaction with Ca(2+)-activated K(+) channels stretch occupies residues 48-55 (GKCMNKKC).

This sequence belongs to the short scorpion toxin superfamily. Potassium channel inhibitor family. Alpha-KTx 01 subfamily. Expressed by the venom gland.

It localises to the secreted. This toxin inhibits numerous potassium channels: shaker (Ki=227 nM), Kv1.2/KCNA2 (nanomolar range), Kv1.3/KCNA3 (nanomolar range), Kv1.5/KCNA5 (Kd&gt;100 nM), Kv1.6/KCNA6 (Ki=22 nM), KCa1.1/KCNMA1 (IC(50)=5.9 nM). It blocks channel activity by a simple bimolecular inhibition process. It also shows a weak interaction with nicotinic acetylcholine receptors (nAChR), suggesting it may weakly inhibit it. It also exhibits pH-specific antimicrobial activities against bacteria (B.subtilis, E.coli and S.aureus) and the fungus C.albicans. This Leiurus hebraeus (Hebrew deathstalker scorpion) protein is Potassium channel toxin alpha-KTx 1.1.